A 294-amino-acid polypeptide reads, in one-letter code: Urease accessory protein UreD (294 aa).

A disordered region spans residues 1–22; it reads MSVEKPVAAGRQNSKATGRHKG.

This sequence belongs to the UreD family. In terms of assembly, ureD, UreF and UreG form a complex that acts as a GTP-hydrolysis-dependent molecular chaperone, activating the urease apoprotein by helping to assemble the nickel containing metallocenter of UreC. The UreE protein probably delivers the nickel.

Its subcellular location is the cytoplasm. Functionally, required for maturation of urease via the functional incorporation of the urease nickel metallocenter. This Alcanivorax borkumensis (strain ATCC 700651 / DSM 11573 / NCIMB 13689 / SK2) protein is Urease accessory protein UreD.